Reading from the N-terminus, the 411-residue chain is MTHWFHRNPLKATAPVSFNFYGVASTQAASKICSDLRSTRARLLELFSDITCNHEMMKNATDAYFSLLLGFIDSLDGGTQDNKLRYIQNFKWTDTLQGNAPSAQQDAVFELVSMGFNVALWYTKYASRLAGKEDITEEEAKEVHRSLKIAAGVFKHLKENHIPKLITPVEKGRDLETRVIDAYTVQCQAEAQEVTIARAIELKHNPGLIAALAYETANYYQKVDHTLATLDPVYIAKWRSYTQLKMCFYMAYSYCYHGQTLLSADKCGEAIRSLQEAEKFYGKAEALCKEYGETKGPGTTAKPSGHLFFRKMGTLVRNTLEKCQRENGFIYFQKVPPEAPQLELKANYGLVEPVPFEFPAMTSQWSPETHTGFDLTKRPKDDSAKPKKEEEVKPMKEPDIKPQKDSGCQIS.

The 306-residue stretch at 90 to 395 (FKWTDTLQGN…PKKEEEVKPM (306 aa)) folds into the BRO1 domain. The segment at 362–411 (TSQWSPETHTGFDLTKRPKDDSAKPKKEEEVKPMKEPDIKPQKDSGCQIS) is disordered. Basic and acidic residues predominate over residues 375-404 (LTKRPKDDSAKPKKEEEVKPMKEPDIKPQK). Cysteine 408 carries the post-translational modification Cysteine methyl ester. A lipid anchor (S-farnesyl cysteine) is attached at cysteine 408. Residues 409–411 (QIS) constitute a propeptide, removed in mature form.

The protein belongs to the BROX family. In terms of processing, farnesylation is required for nuclear envelope localization.

The protein resides in the nucleus membrane. In terms of biological role, nuclear envelope-associated factor that is involved in the nuclear envelope ruptures during interphase (NERDI) repair. This chain is BRO1 domain-containing protein BROX, found in Xenopus tropicalis (Western clawed frog).